A 290-amino-acid polypeptide reads, in one-letter code: 33 kDa chaperonin (290 aa).

2 disulfide bridges follow: C235–C237 and C268–C271.

This sequence belongs to the HSP33 family. In terms of processing, under oxidizing conditions two disulfide bonds are formed involving the reactive cysteines. Under reducing conditions zinc is bound to the reactive cysteines and the protein is inactive.

The protein resides in the cytoplasm. Its function is as follows. Redox regulated molecular chaperone. Protects both thermally unfolding and oxidatively damaged proteins from irreversible aggregation. Plays an important role in the bacterial defense system toward oxidative stress. The sequence is that of 33 kDa chaperonin from Streptococcus pyogenes serotype M2 (strain MGAS10270).